A 446-amino-acid polypeptide reads, in one-letter code: UDP-N-acetylmuramoylalanine--D-glutamate ligase (446 aa).

Residue 118 to 124 (GSNGKST) coordinates ATP.

This sequence belongs to the MurCDEF family.

Its subcellular location is the cytoplasm. The enzyme catalyses UDP-N-acetyl-alpha-D-muramoyl-L-alanine + D-glutamate + ATP = UDP-N-acetyl-alpha-D-muramoyl-L-alanyl-D-glutamate + ADP + phosphate + H(+). It functions in the pathway cell wall biogenesis; peptidoglycan biosynthesis. Functionally, cell wall formation. Catalyzes the addition of glutamate to the nucleotide precursor UDP-N-acetylmuramoyl-L-alanine (UMA). The sequence is that of UDP-N-acetylmuramoylalanine--D-glutamate ligase from Pseudoalteromonas translucida (strain TAC 125).